Reading from the N-terminus, the 345-residue chain is Succinylglutamate desuccinylase (345 aa).

Positions 64, 67, and 161 each coordinate Zn(2+). Glu225 is a catalytic residue.

It belongs to the AspA/AstE family. Succinylglutamate desuccinylase subfamily. The cofactor is Zn(2+).

It carries out the reaction N-succinyl-L-glutamate + H2O = L-glutamate + succinate. The protein operates within amino-acid degradation; L-arginine degradation via AST pathway; L-glutamate and succinate from L-arginine: step 5/5. Functionally, transforms N(2)-succinylglutamate into succinate and glutamate. The sequence is that of Succinylglutamate desuccinylase from Shewanella piezotolerans (strain WP3 / JCM 13877).